A 523-amino-acid polypeptide reads, in one-letter code: UvrABC system protein C (523 aa).

The region spanning 15–93 (HLPGCYLFKD…IKKHWPRYNI (79 aa)) is the GIY-YIG domain. The 36-residue stretch at 197–232 (RELIESMETEMKEMAAKQMFEQAMELRDEIAALEYL) folds into the UVR domain.

It belongs to the UvrC family. As to quaternary structure, interacts with UvrB in an incision complex.

The protein resides in the cytoplasm. The UvrABC repair system catalyzes the recognition and processing of DNA lesions. UvrC both incises the 5' and 3' sides of the lesion. The N-terminal half is responsible for the 3' incision and the C-terminal half is responsible for the 5' incision. This Methanosarcina mazei (strain ATCC BAA-159 / DSM 3647 / Goe1 / Go1 / JCM 11833 / OCM 88) (Methanosarcina frisia) protein is UvrABC system protein C.